The chain runs to 378 residues: Cytochrome b (378 aa).

Transmembrane regions (helical) follow at residues 33–53, 77–98, 113–133, and 178–198; these read FGSL…FLAM, WLIR…YLHI, WNTG…GYVL, and FFAF…LHFL. Residues His-83 and His-97 each coordinate heme b. The heme b site is built by His-182 and His-196. His-201 contacts a ubiquinone. The next 4 helical transmembrane spans lie at 226–246, 288–308, 320–340, and 347–367; these read YKDL…AVFS, LGGV…PFLH, WSQL…WIGG, and LTTV…FLMP.

It belongs to the cytochrome b family. In terms of assembly, the cytochrome bc1 complex contains 3 respiratory subunits (MT-CYB, CYC1 and UQCRFS1), 2 core proteins (UQCRC1 and UQCRC2) and probably 6 low-molecular weight proteins. The cofactor is heme b.

It localises to the mitochondrion inner membrane. Its function is as follows. Component of the ubiquinol-cytochrome c reductase complex (complex III or cytochrome b-c1 complex) that is part of the mitochondrial respiratory chain. The b-c1 complex mediates electron transfer from ubiquinol to cytochrome c. Contributes to the generation of a proton gradient across the mitochondrial membrane that is then used for ATP synthesis. This chain is Cytochrome b (mt-cyb), found in Indostomus paradoxus (Armoured stickleback).